The following is a 59-amino-acid chain: uncharacterized protein (59 aa).

This is an uncharacterized protein from Bacillus subtilis (strain 168).